The following is a 101-amino-acid chain: Small ribosomal subunit protein uS14 (101 aa).

It belongs to the universal ribosomal protein uS14 family. Part of the 30S ribosomal subunit. Contacts proteins S3 and S10.

In terms of biological role, binds 16S rRNA, required for the assembly of 30S particles and may also be responsible for determining the conformation of the 16S rRNA at the A site. This is Small ribosomal subunit protein uS14 from Burkholderia ambifaria (strain MC40-6).